The sequence spans 115 residues: U3-lycotoxin-Ls1l (115 aa).

Positions 1-20 (MKFVLLFGVLLVTLFSYSSA) are cleaved as a signal peptide. Residues 21-44 (EMLDDFDQADEDELLSLIEKEEAR) constitute a propeptide that is removed on maturation. Intrachain disulfides connect cysteine 55-cysteine 72, cysteine 62-cysteine 87, and cysteine 74-cysteine 85.

The protein belongs to the neurotoxin 19 (CSTX) family. 01 subfamily. In terms of tissue distribution, expressed by the venom gland.

It localises to the secreted. This Lycosa singoriensis (Wolf spider) protein is U3-lycotoxin-Ls1l.